We begin with the raw amino-acid sequence, 147 residues long: uncharacterized protein (147 aa).

One can recognise an N-acetyltransferase domain in the interval 1 to 147 (MEIRRADKDD…RPESGGSGSE (147 aa)).

This sequence belongs to the acetyltransferase family.

This is an uncharacterized protein from Archaeoglobus fulgidus (strain ATCC 49558 / DSM 4304 / JCM 9628 / NBRC 100126 / VC-16).